A 278-amino-acid polypeptide reads, in one-letter code: Putative transposase for insertion sequence element IS986/IS6110 (278 aa).

Positions 101 to 268 constitute an Integrase catalytic domain; the sequence is GPPAPNRLWV…VPPVELEAAY (168 aa).

Involved in the transposition of the insertion sequence. In Mycobacterium tuberculosis (strain CDC 1551 / Oshkosh), this protein is Putative transposase for insertion sequence element IS986/IS6110.